Reading from the N-terminus, the 109-residue chain is Small ribosomal subunit protein bS18c (109 aa).

Positions 82-109 are disordered; the sequence is GFERSESTPRTNALKPRNKNKQNNQTQF.

It belongs to the bacterial ribosomal protein bS18 family. As to quaternary structure, part of the 30S ribosomal subunit.

It is found in the plastid. The protein is Small ribosomal subunit protein bS18c of Cuscuta reflexa (Southern Asian dodder).